We begin with the raw amino-acid sequence, 235 residues long: Large ribosomal subunit protein uL1 (235 aa).

The protein belongs to the universal ribosomal protein uL1 family. Part of the 50S ribosomal subunit.

In terms of biological role, binds directly to 23S rRNA. The L1 stalk is quite mobile in the ribosome, and is involved in E site tRNA release. Functionally, protein L1 is also a translational repressor protein, it controls the translation of the L11 operon by binding to its mRNA. The chain is Large ribosomal subunit protein uL1 from Mycobacteroides abscessus (strain ATCC 19977 / DSM 44196 / CCUG 20993 / CIP 104536 / JCM 13569 / NCTC 13031 / TMC 1543 / L948) (Mycobacterium abscessus).